The primary structure comprises 587 residues: Folylpolyglutamate synthase, mitochondrial (587 aa).

Residues 1 to 42 (MSWARSRLCSTLSLAAVSARGATTEGAARRGMSAWPAPQEPG) constitute a mitochondrion transit peptide. 106–109 (GKGS) is a binding site for ATP. Positions 130, 200, and 228 each coordinate Mg(2+). ATP is bound by residues arginine 363 and aspartate 377. A Phosphoserine modification is found at serine 539.

It belongs to the folylpolyglutamate synthase family. Monomer. A monovalent cation is required as a cofactor. As to expression, with non-specific probe, highest content in kidney and liver and lowest in spleen, lung and small intestine, and readily detectable in all of the tumors except hepatoma. Isoform 1 and isoform 2 expressed in leukemic cells and isoform 4 and isoform 5 in liver cells. Isoform 1 and isoform 2 exclusively expressed in hepatoma and Lewis lung carcinoma. Isoform 1 and isoform 2 also expressed in bone marrow, small intestine and spleen. Kidney expresses isoform 1, isoform 2, isoform 4 and isoform 5.

It localises to the mitochondrion inner membrane. It is found in the mitochondrion matrix. The protein localises to the cytoplasm. It carries out the reaction (6S)-5,6,7,8-tetrahydrofolyl-(gamma-L-Glu)(n) + L-glutamate + ATP = (6S)-5,6,7,8-tetrahydrofolyl-(gamma-L-Glu)(n+1) + ADP + phosphate + H(+). It participates in cofactor biosynthesis; tetrahydrofolylpolyglutamate biosynthesis. With respect to regulation, inhibited by ammonium sulfate. Inhibited by pentaglutamate derivative of DDATHF, but isoform 2 is inhibited to a greater extent at lower concentrations of the compound that is isoform 5. Isoform 5 is virtually unaffected by H(4)PteGlu(5) and 5,10-CH(2)-H(4)PteGlu(5) at concentrations that substantially inhibits the activity of isoform 2. Isoform 2 and 5 are equally sensitive to polyglutamates of 10-CHO-H(4)-PteGlu. Catalyzes conversion of folates to polyglutamate derivatives allowing concentration of folate compounds in the cell and the intracellular retention of these cofactors, which are important substrates for most of the folate-dependent enzymes that are involved in one-carbon transfer reactions involved in purine, pyrimidine and amino acid synthesis. Dihydrofolate, tetrahydrofolate, 5,10-methylenetetrahydrofolate, 10-formyltetrahydrofolate and 5-formyltetrahydrofolate are the best substrates. Folic acid and 5-methyltetrahydrofolate can also act as substrates. The protein is Folylpolyglutamate synthase, mitochondrial (Fpgs) of Mus musculus (Mouse).